The chain runs to 279 residues: Rhamnulose-1-phosphate aldolase (279 aa).

The active site involves Glu-115. Residues His-138, His-140, and His-209 each coordinate Zn(2+).

Belongs to the aldolase class II family. RhaD subfamily. It depends on Zn(2+) as a cofactor.

Its subcellular location is the cytoplasm. It carries out the reaction L-rhamnulose 1-phosphate = (S)-lactaldehyde + dihydroxyacetone phosphate. It functions in the pathway carbohydrate degradation; L-rhamnose degradation; glycerone phosphate from L-rhamnose: step 3/3. Catalyzes the reversible cleavage of L-rhamnulose-1-phosphate to dihydroxyacetone phosphate (DHAP) and L-lactaldehyde. The protein is Rhamnulose-1-phosphate aldolase of Enterococcus faecalis (strain ATCC 700802 / V583).